The primary structure comprises 126 residues: Heavy metal-associated isoprenylated plant protein 14 (126 aa).

Residues Ala3–Asp69 form the HMA domain. Position 123 is a cysteine methyl ester (Cys123). Cys123 carries S-farnesyl cysteine lipidation. A propeptide spans Val124 to Met126 (removed in mature form).

Belongs to the HIPP family.

Probable heavy-metal-binding protein. The sequence is that of Heavy metal-associated isoprenylated plant protein 14 from Arabidopsis thaliana (Mouse-ear cress).